A 403-amino-acid polypeptide reads, in one-letter code: Peroxisomal membrane protein PEX13 (403 aa).

Positions 1–11 are enriched in pro residues; the sequence is MASQPPPPPKP. A disordered region spans residues 1 to 69; it reads MASQPPPPPK…SQQTGGNNVN (69 aa). The Peroxisomal matrix portion of the chain corresponds to 1–134; the sequence is MASQPPPPPK…SSRGAFQSIE (134 aa). The span at 59–69 shows a compositional bias: polar residues; it reads PSQQTGGNNVN. Residues 135 to 155 traverse the membrane as a helical segment; sequence SIVHAFASVSMMMDATFSAVY. The interval 145–233 is targeting to peroxisomes; that stretch reads MMMDATFSAV…EDQANNSAKS (89 aa). At 156–174 the chain is on the cytoplasmic side; the sequence is NSFRAVLDVANHFSRLKIH. The chain crosses the membrane as a helical span at residues 175 to 192; the sequence is FTKVFSAFALVRTIRYLY. The segment at 175 to 196 is interaction with PEX19; sequence FTKVFSAFALVRTIRYLYRRLQ. Residues 193–233 lie on the Peroxisomal matrix side of the membrane; that stretch reads RRLQWMMGLRRGSENEDLWAESEGTVACLGAEDQANNSAKS. Residues 234 to 254 traverse the membrane as a helical segment; that stretch reads WPIFLFFAVILGGPYLIWKLL. The Cytoplasmic portion of the chain corresponds to 255 to 403; the sequence is STHSDEVTDS…TGKNGDKQDL (149 aa). The region spanning 272-336 is the SH3 domain; it reads DDHVVARAEY…PANYVKILGK (65 aa). Disordered regions lie at residues 341 to 364 and 381 to 403; these read KTVESSTMPKQQQSFTNPTSVKGV and FVETNKVAGTPDSTGKNGDKQDL. Over residues 344 to 364 the composition is skewed to polar residues; that stretch reads ESSTMPKQQQSFTNPTSVKGV.

It belongs to the peroxin-13 family. In terms of assembly, interacts (via SH3 domain) with PEX14 (via SH3-binding motif); forming the PEX13-PEX14 docking complex. Interacts with PEX19.

The protein resides in the peroxisome membrane. Component of the PEX13-PEX14 docking complex, a translocon channel that specifically mediates the import of peroxisomal cargo proteins bound to PEX5 receptor. The PEX13-PEX14 docking complex forms a large import pore which can be opened to a diameter of about 9 nm. Mechanistically, PEX5 receptor along with cargo proteins associates with the PEX14 subunit of the PEX13-PEX14 docking complex in the cytosol, leading to the insertion of the receptor into the organelle membrane with the concomitant translocation of the cargo into the peroxisome matrix. Involved in the import of PTS1- and PTS2-type containing proteins. This chain is Peroxisomal membrane protein PEX13, found in Rattus norvegicus (Rat).